A 423-amino-acid chain; its full sequence is UDP-N-acetylglucosamine 1-carboxyvinyltransferase 1 (423 aa).

A phosphoenolpyruvate-binding site is contributed by 23 to 24; sequence KN. Residue R96 coordinates UDP-N-acetyl-alpha-D-glucosamine. C120 serves as the catalytic Proton donor. At C120 the chain carries 2-(S-cysteinyl)pyruvic acid O-phosphothioketal. Residues 125 to 129, D309, and V331 each bind UDP-N-acetyl-alpha-D-glucosamine; that span reads RPIDL.

It belongs to the EPSP synthase family. MurA subfamily.

Its subcellular location is the cytoplasm. The enzyme catalyses phosphoenolpyruvate + UDP-N-acetyl-alpha-D-glucosamine = UDP-N-acetyl-3-O-(1-carboxyvinyl)-alpha-D-glucosamine + phosphate. It participates in cell wall biogenesis; peptidoglycan biosynthesis. In terms of biological role, cell wall formation. Adds enolpyruvyl to UDP-N-acetylglucosamine. The sequence is that of UDP-N-acetylglucosamine 1-carboxyvinyltransferase 1 from Streptococcus thermophilus (strain ATCC BAA-250 / LMG 18311).